Reading from the N-terminus, the 101-residue chain is Small ribosomal subunit protein uS14 (101 aa).

It belongs to the universal ribosomal protein uS14 family. As to quaternary structure, part of the 30S ribosomal subunit. Contacts proteins S3 and S10.

Binds 16S rRNA, required for the assembly of 30S particles and may also be responsible for determining the conformation of the 16S rRNA at the A site. The chain is Small ribosomal subunit protein uS14 from Beijerinckia indica subsp. indica (strain ATCC 9039 / DSM 1715 / NCIMB 8712).